The sequence spans 50 residues: Photosystem II reaction center protein M (50 aa).

The helical transmembrane segment at 7-27 (GFVASLLFVGVPTIFLIGLFI) threads the bilayer.

The protein belongs to the PsbM family. As to quaternary structure, PSII is composed of 1 copy each of membrane proteins PsbA, PsbB, PsbC, PsbD, PsbE, PsbF, PsbH, PsbI, PsbJ, PsbK, PsbL, PsbM, PsbT, PsbX, PsbY, Psb30/Ycf12, peripheral proteins PsbO, CyanoQ (PsbQ), PsbU, PsbV and a large number of cofactors. It forms dimeric complexes.

The protein localises to the cellular thylakoid membrane. Its function is as follows. One of the components of the core complex of photosystem II (PSII). PSII is a light-driven water:plastoquinone oxidoreductase that uses light energy to abstract electrons from H(2)O, generating O(2) and a proton gradient subsequently used for ATP formation. It consists of a core antenna complex that captures photons, and an electron transfer chain that converts photonic excitation into a charge separation. This subunit is found at the monomer-monomer interface. This chain is Photosystem II reaction center protein M, found in Prochlorococcus marinus (strain MIT 9515).